The sequence spans 393 residues: Yellow-related salivary protein SP03B (393 aa).

Residues 1 to 18 (MKIFLCLIAVVFLQGVVG) form the signal peptide. Asparagine 29 is a glycosylation site (N-linked (GlcNAc...) asparagine).

Belongs to the major royal jelly protein family. As to expression, female salivary gland (at protein level).

It is found in the secreted. Functionally, probably modulates blood feeding of sand flies on vertebrate species by binding and sequestering different mediators involved in the host response. Binds biogenic amines. Binds serotonin with high affinity. Poorly binds histamine. Does not bind dopamine, noradrenaline, adrenaline and octopamine. The polypeptide is Yellow-related salivary protein SP03B (Phlebotomus perniciosus (Phlebotomine sand fly)).